We begin with the raw amino-acid sequence, 357 residues long: Holliday junction branch migration complex subunit RuvB (357 aa).

A disordered region spans residues 1–27 (MGRFSNADGPGDDADEREVTPALTVGE). Residues 1–195 (MGRFSNADGP…FGFTAHMDFY (195 aa)) are large ATPase domain (RuvB-L). ATP-binding positions include L34, R35, G76, K79, T80, S81, 142–144 (EDF), R185, Y195, and R232. Residue T80 participates in Mg(2+) binding. The segment at 196-266 (EPAELERVLA…IAKYALEVYD (71 aa)) is small ATPAse domain (RuvB-S). The tract at residues 269–357 (ELGLDRLDRA…GGLGQVGLFE (89 aa)) is head domain (RuvB-H). Positions 324 and 329 each coordinate DNA.

Belongs to the RuvB family. As to quaternary structure, homohexamer. Forms an RuvA(8)-RuvB(12)-Holliday junction (HJ) complex. HJ DNA is sandwiched between 2 RuvA tetramers; dsDNA enters through RuvA and exits via RuvB. An RuvB hexamer assembles on each DNA strand where it exits the tetramer. Each RuvB hexamer is contacted by two RuvA subunits (via domain III) on 2 adjacent RuvB subunits; this complex drives branch migration. In the full resolvosome a probable DNA-RuvA(4)-RuvB(12)-RuvC(2) complex forms which resolves the HJ.

It is found in the cytoplasm. The catalysed reaction is ATP + H2O = ADP + phosphate + H(+). In terms of biological role, the RuvA-RuvB-RuvC complex processes Holliday junction (HJ) DNA during genetic recombination and DNA repair, while the RuvA-RuvB complex plays an important role in the rescue of blocked DNA replication forks via replication fork reversal (RFR). RuvA specifically binds to HJ cruciform DNA, conferring on it an open structure. The RuvB hexamer acts as an ATP-dependent pump, pulling dsDNA into and through the RuvAB complex. RuvB forms 2 homohexamers on either side of HJ DNA bound by 1 or 2 RuvA tetramers; 4 subunits per hexamer contact DNA at a time. Coordinated motions by a converter formed by DNA-disengaged RuvB subunits stimulates ATP hydrolysis and nucleotide exchange. Immobilization of the converter enables RuvB to convert the ATP-contained energy into a lever motion, pulling 2 nucleotides of DNA out of the RuvA tetramer per ATP hydrolyzed, thus driving DNA branch migration. The RuvB motors rotate together with the DNA substrate, which together with the progressing nucleotide cycle form the mechanistic basis for DNA recombination by continuous HJ branch migration. Branch migration allows RuvC to scan DNA until it finds its consensus sequence, where it cleaves and resolves cruciform DNA. This Mycolicibacterium gilvum (strain PYR-GCK) (Mycobacterium gilvum (strain PYR-GCK)) protein is Holliday junction branch migration complex subunit RuvB.